The following is a 116-amino-acid chain: Large ribosomal subunit protein eL22A (116 aa).

The protein belongs to the eukaryotic ribosomal protein eL22 family.

The protein is Large ribosomal subunit protein eL22A (rpl22) of Dictyostelium discoideum (Social amoeba).